Reading from the N-terminus, the 525-residue chain is MGWLFLKVLLAGVSFSGFLYPLVDFCISGKTRGQKPNFVIILADDMGWGDLGANWAETKDTANLDKMASEGMRFVDFHAAASTCSPSRASLLTGRLGLRNGVTRNFAVTSVGGLPLNETTLAEVLQQAGYVTGIIGKWHLGHHGSYHPNFRGFDYYFGIPYSHDMGCTDTPGYNHPPCPACPQGDGPSRNLQRDCYTDVALPLYENLNIVEQPVNLSSLAQKYAEKATQFIQRASTSGRPFLLYVALAHMHVPLPVTQLPAAPRGRSLYGAGLWEMDSLVGQIKDKVDHTVKENTFLWFTGDNGPWAQKCELAGSVGPFTGFWQTRQGGSPAKQTTWEGGHRVPALAYWPGRVPVNVTSTALLSVLDIFPTVVALAQASLPQGRRFDGVDVSEVLFGRSQPGHRVLFHPNSGAAGEFGALQTVRLERYKAFYITGGARACDGSTGPELQHKFPLIFNLEDDTAEAVPLERGGAEYQAVLPEVRKVLADVLQDIANDNISSADYTQDPSVTPCCNPYQIACRCQAA.

An N-terminal signal peptide occupies residues 1–16 (MGWLFLKVLLAGVSFS). Aspartate 44, aspartate 45, and cysteine 84 together coordinate Ca(2+). Cysteine 84 acts as the Nucleophile in catalysis. A 3-oxoalanine (Cys) modification is found at cysteine 84. Asparagine 117 is a glycosylation site (N-linked (GlcNAc...) asparagine). Lysine 137 lines the substrate pocket. Histidine 139 is a catalytic residue. Serine 162 is a binding site for substrate. N-linked (GlcNAc...) asparagine glycosylation is present at asparagine 215. Residue histidine 251 participates in substrate binding. 2 residues coordinate Ca(2+): aspartate 302 and asparagine 303. N-linked (GlcNAc...) asparagine glycosylation is found at asparagine 356 and asparagine 497.

This sequence belongs to the sulfatase family. It depends on Ca(2+) as a cofactor. In terms of processing, N-glycosylated. N-glycosylated with both high mannose and complex type sugars. The conversion to 3-oxoalanine (also known as C-formylglycine, FGly), of a serine or cysteine residue in prokaryotes and of a cysteine residue in eukaryotes, is critical for catalytic activity. Post-translationally, the 63-kDa precursor undergoes proteolytic processing in two steps, yielding two fragments in the first step (apparent molecular masses of 44 and 18 kDa). In the second step, the 44-kDa fragment is processed further to the 34- and 10-kDa chains. The 10-kDa chain is a cleavage product of the 44-kDa fragment but linked to the 18-kDa chain through a disulfide bridge. As to expression, widely expressed, with very low expression in brain, lung, heart and skeletal muscle.

It is found in the lysosome. The catalysed reaction is an aryl sulfate + H2O = a phenol + sulfate + H(+). The enzyme catalyses Hydrolysis of the 3-sulfate groups of the N-sulfo-D-glucosamine 3-O-sulfate units of heparin.. Inhibited by phosphate. The phosphate forms a covalent bond with the active site 3-oxoalanine. Displays arylsulfatase activity at acidic pH towards artificial substrates, such as p-nitrocatechol sulfate and also, but with a lower activity towards p-nitrophenyl sulfate and 4-methylumbelliferyl sulfate. Catalyzes the hydrolysis of the 3-sulfate groups of the N-sulfo-D-glucosamine 3-O-sulfate units of heparin. This is Arylsulfatase G (ARSG) from Homo sapiens (Human).